We begin with the raw amino-acid sequence, 208 residues long: AN1-type zinc finger protein 6 (208 aa).

An A20-type zinc finger spans residues 8–42; sequence SQVPMLCSTGCGFYGNPRTNGMCSVCYKEHLQRQN. Zn(2+)-binding residues include cysteine 14, cysteine 18, cysteine 30, and cysteine 33. Positions 41 to 68 are enriched in polar residues; it reads QNSSNGRISPPATSVSSLSESLPVQCTD. The interval 41 to 140 is disordered; the sequence is QNSSNGRISP…PSEEQSKSLE (100 aa). Residue serine 49 is modified to Phosphoserine. Positions 80 to 94 are enriched in low complexity; sequence STSSSMQPSPVSNQS. Composition is skewed to polar residues over residues 95 to 110 and 120 to 133; these read LLSE…STSV and VQAS…QPSE. The AN1-type zinc finger occupies 143–189; sequence KQKKNRCFMCRKKVGLTGFECRCGNVYCGVHRYSDVHNCSYNYKADA. The Zn(2+) site is built by cysteine 149, cysteine 152, cysteine 163, cysteine 165, cysteine 170, histidine 173, histidine 179, and cysteine 181. An N6-acetyllysine modification is found at lysine 204.

In terms of assembly, interacts with PKN1. Interacts with TRAF2. Interacts with mono- and polyubiquitin. Interacts with PEX6. Interacts with PEX5 (Cys-linked ubiquitinated). In terms of tissue distribution, widely expressed with high level in heart, skeletal muscle, liver, kidney and placenta.

Its subcellular location is the cytoplasm. Its function is as follows. Involved in regulation of TNF-alpha induced NF-kappa-B activation and apoptosis. Involved in modulation of 'Lys-48'-linked polyubiquitination status of TRAF2 and decreases association of TRAF2 with RIPK1. Required for PTS1 target sequence-dependent protein import into peroxisomes and PEX5 stability; may cooperate with PEX6. In vitro involved in PEX5 export from the cytosol to peroxisomes. The chain is AN1-type zinc finger protein 6 (ZFAND6) from Homo sapiens (Human).